A 364-amino-acid chain; its full sequence is DNA polymerase IV (364 aa).

Positions 14 to 198 (IIHIDMDAFF…LPIEKFHGVG (185 aa)) constitute a UmuC domain. 2 residues coordinate Mg(2+): D18 and D116. E117 is a catalytic residue.

Belongs to the DNA polymerase type-Y family. As to quaternary structure, monomer. Mg(2+) is required as a cofactor.

It is found in the cytoplasm. It catalyses the reaction DNA(n) + a 2'-deoxyribonucleoside 5'-triphosphate = DNA(n+1) + diphosphate. Poorly processive, error-prone DNA polymerase involved in untargeted mutagenesis. Copies undamaged DNA at stalled replication forks, which arise in vivo from mismatched or misaligned primer ends. These misaligned primers can be extended by PolIV. Exhibits no 3'-5' exonuclease (proofreading) activity. May be involved in translesional synthesis, in conjunction with the beta clamp from PolIII. The sequence is that of DNA polymerase IV from Streptococcus pyogenes serotype M4 (strain MGAS10750).